Here is a 357-residue protein sequence, read N- to C-terminus: Alkanal monooxygenase alpha chain (357 aa).

This sequence belongs to the bacterial luciferase oxidoreductase family. Heterodimer of an alpha and a beta chain.

It catalyses the reaction a long-chain fatty aldehyde + FMNH2 + O2 = a long-chain fatty acid + hnu + FMN + H2O + 2 H(+). Light-emitting reaction in luminous bacteria. The polypeptide is Alkanal monooxygenase alpha chain (luxA) (Kryptophanaron alfredi symbiont).